A 279-amino-acid chain; its full sequence is MAAEAGSAAAGAAYEEERRKRVLENLKHLEDLGIKKMSKSLLEAARLQKSTRASPKPRKKFEVGATEVRRSSRARNSVSYKENFDELNSFLCRRRGSRIRSTEQGRDYTGRVASYEQQQRAFKKAERLQNSLDPENPSFVKTMVRSHVSSCFWLGLPTRFCKLHLPPKEYKMVLEDEEGGEFDSVYIGNRTGLSGGWRGFAMHHNLEDGDSLVFELAEPDRFKIYIIKAVDEDANESEPADEEAIGDKDTSTEDAAEQDDSPNAEPLKGTKRRKLRGRR.

The interval 45 to 68 (ARLQKSTRASPKPRKKFEVGATEV) is disordered. Positions 139–230 (FVKTMVRSHV…RFKIYIIKAV (92 aa)) form a DNA-binding region, TF-B3. 2 stretches are compositionally biased toward acidic residues: residues 233–244 (DANESEPADEEA) and 252–262 (TEDAAEQDDSP). Positions 233-279 (DANESEPADEEAIGDKDTSTEDAAEQDDSPNAEPLKGTKRRKLRGRR) are disordered. The span at 269 to 279 (GTKRRKLRGRR) shows a compositional bias: basic residues.

Its subcellular location is the nucleus. In Oryza sativa subsp. japonica (Rice), this protein is B3 domain-containing protein Os05g0481400.